Here is a 529-residue protein sequence, read N- to C-terminus: Bifunctional purine biosynthesis protein PurH (529 aa).

The MGS-like domain occupies 1–148; sequence MQQRRPVRRA…KNHKDVAIVV (148 aa).

The protein belongs to the PurH family.

The enzyme catalyses (6R)-10-formyltetrahydrofolate + 5-amino-1-(5-phospho-beta-D-ribosyl)imidazole-4-carboxamide = 5-formamido-1-(5-phospho-D-ribosyl)imidazole-4-carboxamide + (6S)-5,6,7,8-tetrahydrofolate. The catalysed reaction is IMP + H2O = 5-formamido-1-(5-phospho-D-ribosyl)imidazole-4-carboxamide. It functions in the pathway purine metabolism; IMP biosynthesis via de novo pathway; 5-formamido-1-(5-phospho-D-ribosyl)imidazole-4-carboxamide from 5-amino-1-(5-phospho-D-ribosyl)imidazole-4-carboxamide (10-formyl THF route): step 1/1. Its pathway is purine metabolism; IMP biosynthesis via de novo pathway; IMP from 5-formamido-1-(5-phospho-D-ribosyl)imidazole-4-carboxamide: step 1/1. The polypeptide is Bifunctional purine biosynthesis protein PurH (Salmonella paratyphi C (strain RKS4594)).